The following is a 262-amino-acid chain: Acyl-[acyl-carrier-protein]--UDP-N-acetylglucosamine O-acyltransferase (262 aa).

This sequence belongs to the transferase hexapeptide repeat family. LpxA subfamily. In terms of assembly, homotrimer.

Its subcellular location is the cytoplasm. The catalysed reaction is a (3R)-hydroxyacyl-[ACP] + UDP-N-acetyl-alpha-D-glucosamine = a UDP-3-O-[(3R)-3-hydroxyacyl]-N-acetyl-alpha-D-glucosamine + holo-[ACP]. The protein operates within glycolipid biosynthesis; lipid IV(A) biosynthesis; lipid IV(A) from (3R)-3-hydroxytetradecanoyl-[acyl-carrier-protein] and UDP-N-acetyl-alpha-D-glucosamine: step 1/6. Functionally, involved in the biosynthesis of lipid A, a phosphorylated glycolipid that anchors the lipopolysaccharide to the outer membrane of the cell. The sequence is that of Acyl-[acyl-carrier-protein]--UDP-N-acetylglucosamine O-acyltransferase from Campylobacter concisus (strain 13826).